A 155-amino-acid polypeptide reads, in one-letter code: Small ribosomal subunit protein uS7c (155 aa).

The protein belongs to the universal ribosomal protein uS7 family. Part of the 30S ribosomal subunit.

Its subcellular location is the plastid. The protein resides in the chloroplast. In terms of biological role, one of the primary rRNA binding proteins, it binds directly to 16S rRNA where it nucleates assembly of the head domain of the 30S subunit. This Ananas comosus (Pineapple) protein is Small ribosomal subunit protein uS7c (rps7).